Reading from the N-terminus, the 117-residue chain is Large ribosomal subunit protein uL18 (117 aa).

Belongs to the universal ribosomal protein uL18 family. Part of the 50S ribosomal subunit; part of the 5S rRNA/L5/L18/L25 subcomplex. Contacts the 5S and 23S rRNAs.

This is one of the proteins that bind and probably mediate the attachment of the 5S RNA into the large ribosomal subunit, where it forms part of the central protuberance. This is Large ribosomal subunit protein uL18 from Enterobacter sp. (strain 638).